Consider the following 274-residue polypeptide: Oxidized low-density lipoprotein receptor 1 (274 aa).

The segment covering 1–16 (MAVDDLKVKPMKDQPD) has biased composition (basic and acidic residues). The disordered stretch occupies residues 1–25 (MAVDDLKVKPMKDQPDQKSNGKKPK). Topologically, residues 1–31 (MAVDDLKVKPMKDQPDQKSNGKKPKGLRFLS) are cytoplasmic. The chain crosses the membrane as a helical; Signal-anchor for type II membrane protein span at residues 32 to 54 (SPWWCPAAVALGVLCLGSLMTII). 2 S-palmitoyl cysteine lipidation sites follow: Cys36 and Cys46. The segment at 55–150 (MLGMQLLQVS…SGPCPEDWLW (96 aa)) is neck. The Extracellular portion of the chain corresponds to 55-274 (MLGMQLLQVS…QKKANLLRSE (220 aa)). Asn73 and Asn139 each carry an N-linked (GlcNAc...) asparagine glycan. The stretch at 84 to 139 (QVLAQQQAEAASQESQRELKEMIETLAKRLDEKSKKQMELNHQYLNLQEALKRMDN) forms a coiled coil. 3 cysteine pairs are disulfide-bonded: Cys144–Cys155, Cys172–Cys264, and Cys243–Cys256. The C-type lectin domain maps to 151-265 (HGKNCYLFSS…CILVAYSICQ (115 aa)).

In terms of assembly, homodimer; disulfide-linked. May form a hexamer composed of 3 homodimers. Interacts with HSP70. Post-translationally, N-glycosylated.

The protein resides in the cell membrane. It localises to the membrane raft. The protein localises to the secreted. Its function is as follows. Receptor that mediates the recognition, internalization and degradation of oxidatively modified low density lipoprotein (oxLDL) by vascular endothelial cells. OxLDL is a marker of atherosclerosis that induces vascular endothelial cell activation and dysfunction, resulting in pro-inflammatory responses, pro-oxidative conditions and apoptosis. Its association with oxLDL induces the activation of NF-kappa-B through an increased production of intracellular reactive oxygen and a variety of pro-atherogenic cellular responses including a reduction of nitric oxide (NO) release, monocyte adhesion and apoptosis. In addition to binding oxLDL, it acts as a receptor for the HSP70 protein involved in antigen cross-presentation to naive T-cells in dendritic cells, thereby participating in cell-mediated antigen cross-presentation. Also involved in inflammatory process, by acting as a leukocyte-adhesion molecule at the vascular interface in endotoxin-induced inflammation. Also acts as a receptor for advanced glycation end (AGE) products, activated platelets, monocytes, apoptotic cells and both Gram-negative and Gram-positive bacteria. This is Oxidized low-density lipoprotein receptor 1 (OLR1) from Oryctolagus cuniculus (Rabbit).